Here is a 28-residue protein sequence, read N- to C-terminus: Dolichyl-diphosphooligosaccharide--protein glycosyltransferase subunit 1 (28 aa).

It belongs to the OST1 family. As to quaternary structure, component of the oligosaccharyltransferase (OST) complex.

The protein localises to the endoplasmic reticulum membrane. Its pathway is protein modification; protein glycosylation. Its function is as follows. Subunit of the oligosaccharyl transferase (OST) complex that catalyzes the initial transfer of a defined glycan (Glc(3)Man(9)GlcNAc(2) in eukaryotes) from the lipid carrier dolichol-pyrophosphate to an asparagine residue within an Asn-X-Ser/Thr consensus motif in nascent polypeptide chains, the first step in protein N-glycosylation. N-glycosylation occurs cotranslationally and the complex associates with the Sec61 complex at the channel-forming translocon complex that mediates protein translocation across the endoplasmic reticulum (ER). All subunits are required for a maximal enzyme activity. The polypeptide is Dolichyl-diphosphooligosaccharide--protein glycosyltransferase subunit 1 (Gallus gallus (Chicken)).